The primary structure comprises 482 residues: Glutamyl-tRNA(Gln) amidotransferase subunit A (482 aa).

Residues Lys-75 and Ser-150 each act as charge relay system in the active site. Ser-174 (acyl-ester intermediate) is an active-site residue.

This sequence belongs to the amidase family. GatA subfamily. Heterotrimer of A, B and C subunits.

The enzyme catalyses L-glutamyl-tRNA(Gln) + L-glutamine + ATP + H2O = L-glutaminyl-tRNA(Gln) + L-glutamate + ADP + phosphate + H(+). Allows the formation of correctly charged Gln-tRNA(Gln) through the transamidation of misacylated Glu-tRNA(Gln) in organisms which lack glutaminyl-tRNA synthetase. The reaction takes place in the presence of glutamine and ATP through an activated gamma-phospho-Glu-tRNA(Gln). This is Glutamyl-tRNA(Gln) amidotransferase subunit A from Cyanothece sp. (strain PCC 7425 / ATCC 29141).